Here is a 532-residue protein sequence, read N- to C-terminus: Beta-hexosaminidase subunit A1 (532 aa).

The N-terminal stretch at 1–18 (MIKKIILFFAVLIAIVIG) is a signal peptide. 2 N-linked (GlcNAc...) asparagine glycosylation sites follow: Asn72 and Asn79. Glu308 serves as the catalytic Proton donor. Residues Asn350 and Asn427 are each glycosylated (N-linked (GlcNAc...) asparagine).

The protein belongs to the glycosyl hydrolase 20 family. As to quaternary structure, dimer. In terms of processing, the N-terminus is blocked. N-glycosylated.

The protein resides in the lysosome. It carries out the reaction Hydrolysis of terminal non-reducing N-acetyl-D-hexosamine residues in N-acetyl-beta-D-hexosaminides.. Responsible for the degradation of GM2 gangliosides, and a variety of other molecules containing terminal N-acetyl hexosamines. This enzyme plays a role during the slug stage of development in the maintenance of pseudoplasmodia of normal size. This Dictyostelium discoideum (Social amoeba) protein is Beta-hexosaminidase subunit A1 (hexa1).